The following is a 257-amino-acid chain: Hydroxyacylglutathione hydrolase (257 aa).

Residues histidine 54, histidine 56, aspartate 58, histidine 59, histidine 113, aspartate 137, and histidine 175 each coordinate Zn(2+).

It belongs to the metallo-beta-lactamase superfamily. Glyoxalase II family. In terms of assembly, monomer. Zn(2+) serves as cofactor.

It carries out the reaction an S-(2-hydroxyacyl)glutathione + H2O = a 2-hydroxy carboxylate + glutathione + H(+). It functions in the pathway secondary metabolite metabolism; methylglyoxal degradation; (R)-lactate from methylglyoxal: step 2/2. Thiolesterase that catalyzes the hydrolysis of S-D-lactoyl-glutathione to form glutathione and D-lactic acid. This is Hydroxyacylglutathione hydrolase from Gloeothece citriformis (strain PCC 7424) (Cyanothece sp. (strain PCC 7424)).